The sequence spans 198 residues: E3 ubiquitin-protein ligase rnf152 (198 aa).

Residues 12-55 form an RING-type zinc finger; it reads CQICFNYFSQRRLPKLLHCQHTCCSVCLSQMRLSQREIRCPWCR. A helical transmembrane segment spans residues 162 to 182; sequence TGVCTVLLVAFILIFLLGIVL.

It belongs to the RNF152 family.

The protein localises to the lysosome membrane. The enzyme catalyses S-ubiquitinyl-[E2 ubiquitin-conjugating enzyme]-L-cysteine + [acceptor protein]-L-lysine = [E2 ubiquitin-conjugating enzyme]-L-cysteine + N(6)-ubiquitinyl-[acceptor protein]-L-lysine.. The protein operates within protein modification; protein ubiquitination. Functionally, E3 ubiquitin-protein ligase that acts as a negative regulator of mTORC1 signaling by mediating ubiquitination of RagA/RRAGA and RHEB. Catalyzes 'Lys-63'-linked polyubiquitination of RagA/RRAGA in response to amino acid starvation, thereby regulating mTORC1 signaling. Also mediates monoubiquitination of RHEB, promoting its association with the TSC-TBC complex and subsequent inhibition. Also mediates 'Lys-48'-linked polyubiquitination of target proteins and their subsequent targeting to the proteasome for degradation. The sequence is that of E3 ubiquitin-protein ligase rnf152 from Danio rerio (Zebrafish).